We begin with the raw amino-acid sequence, 224 residues long: Urease accessory protein UreF 2 (224 aa).

This sequence belongs to the UreF family. As to quaternary structure, ureD, UreF and UreG form a complex that acts as a GTP-hydrolysis-dependent molecular chaperone, activating the urease apoprotein by helping to assemble the nickel containing metallocenter of UreC. The UreE protein probably delivers the nickel.

The protein resides in the cytoplasm. Functionally, required for maturation of urease via the functional incorporation of the urease nickel metallocenter. This Pseudomonas syringae pv. tomato (strain ATCC BAA-871 / DC3000) protein is Urease accessory protein UreF 2.